The chain runs to 782 residues: Coiled-coil alpha-helical rod protein 1 (782 aa).

2 stretches are compositionally biased toward basic and acidic residues: residues 62-74 and 208-218; these read ERDV…EPGR and ETRRAGEAKEL. 2 disordered regions span residues 62–82 and 191–218; these read ERDV…WGLE and SSLT…AKEL. Coiled-coil stretches lie at residues 82-314, 344-435, and 498-691; these read EGSQ…ELTR, LMVQ…VVNA, and VADV…QQEG.

Its subcellular location is the cytoplasm. It is found in the nucleus. Functionally, may be a regulator of keratinocyte proliferation or differentiation. This chain is Coiled-coil alpha-helical rod protein 1 (CCHCR1), found in Pongo pygmaeus (Bornean orangutan).